The chain runs to 217 residues: Carboxylesterase Culp1 (217 aa).

The signal sequence occupies residues 1–32 (MTPRSLVRIVGVVVATTLALVSAPAGGRAAHA). Residues Cys-35 and Cys-107 are joined by a disulfide bond. Residue Ser-118 is the Nucleophile of the active site. The cysteines at positions 177 and 184 are disulfide-linked. Residue Asp-181 is part of the active site. The active-site Proton donor/acceptor is the His-193.

Belongs to the cutinase family.

It is found in the secreted. The catalysed reaction is a fatty acid ester + H2O = an aliphatic alcohol + a fatty acid + H(+). Its function is as follows. Shows esterase activity, with a preference for short- and medium-chain fatty acids. In Mycobacterium bovis (strain ATCC BAA-935 / AF2122/97), this protein is Carboxylesterase Culp1.